The sequence spans 293 residues: Ribosomal protein L11 methyltransferase (293 aa).

Residues T145, G166, D188, and N230 each contribute to the S-adenosyl-L-methionine site.

This sequence belongs to the methyltransferase superfamily. PrmA family.

The protein localises to the cytoplasm. It carries out the reaction L-lysyl-[protein] + 3 S-adenosyl-L-methionine = N(6),N(6),N(6)-trimethyl-L-lysyl-[protein] + 3 S-adenosyl-L-homocysteine + 3 H(+). Methylates ribosomal protein L11. In Shewanella baltica (strain OS223), this protein is Ribosomal protein L11 methyltransferase.